Consider the following 832-residue polypeptide: Sodium/hydrogen exchanger 3 (832 aa).

A signal peptide spans 1-29 (MSGRGGCGPCWGLLLALVLALGALPWTQG). The Extracellular segment spans residues 30–50 (AEQEHHDEIQGFQIVTFKWHH). The helical transmembrane segment at 51–73 (VQDPYIIALWVLVASLAKIVFHL) threads the bilayer. Topologically, residues 74–81 (SHKVTSVV) are cytoplasmic. A helical transmembrane segment spans residues 82–101 (PESALLIVLGLVLGGIVLAA). Topologically, residues 102–110 (DHIASFTLT) are extracellular. A helical transmembrane segment spans residues 111-128 (PTVFFFYLLPPIVLDAGY). The Cytoplasmic portion of the chain corresponds to 129–131 (FMP). A helical transmembrane segment spans residues 132–167 (NRLFFSNLGSILLYAVVGTVWNAATTGLSLYGVFLS). 2 residues coordinate a 1,2-diacyl-sn-glycero-3-phospho-(1D-myo-inositol): G140 and S141. The Extracellular segment spans residues 168–180 (GIMGELKIGLLDF). Residues 181-202 (LLFGSLIAAVDPVAVLAVFEEV) form a helical membrane-spanning segment. Residues 203–204 (HV) are Cytoplasmic-facing. Residues 205–236 (NEVLFIIVFGESLLNDAVTVVLYNVFQSFVTL) form a helical membrane-spanning segment. The Extracellular segment spans residues 237-243 (GGDKVTG). A helical membrane pass occupies residues 244-278 (VDCVKGIVSFFVVSLGGTLVGVVFAFLLSLVTRFT). Over 279–280 (KH) the chain is Cytoplasmic. Residues 281-303 (VRVIEPGFVFIISYLSYLTSEML) form a helical membrane-spanning segment. Over 304 to 305 (SL) the chain is Extracellular. A helical membrane pass occupies residues 306–322 (SSILAITFCGICCQKYV). Residues 323–329 (KANISEQ) are Cytoplasmic-facing. A helical membrane pass occupies residues 330–358 (SATTVRYTMKMLASGAETIIFMFLGISAV). Over 359–366 (DPLIWTWN) the chain is Extracellular. A helical transmembrane segment spans residues 367–388 (TAFVLLTLLFVSVFRAIGVVLQ). At 389-401 (TWLLNRYRMVQLE) the chain is on the cytoplasmic side. M397 provides a ligand contact to a 1,2-diacyl-sn-glycero-3-phospho-(1D-myo-inositol). Residues 402–425 (LIDQVVMSYGGLRGAVAFALVALL) form a helical membrane-spanning segment. Residues 426–432 (DGNKVKE) lie on the Extracellular side of the membrane. Residues 433-466 (KNLFVSTTIIVVFFTVIFQGLTIKPLVQWLKVKR) form a helical membrane-spanning segment. Residues 467–832 (SEHREPKLNE…GAEHPESTHM (366 aa)) are Cytoplasmic-facing. A 1,2-diacyl-sn-glycero-3-phospho-(1D-myo-inositol)-binding residues include Q496, I497, and H499. Phosphoserine occurs at positions 554 and 562. The tract at residues 575–589 (RPSTVEASVSYLLRE) is interaction with EZR. An interaction with NHERF4 region spans residues 590 to 667 (SASAVCLDMQ…RKRLESFKSA (78 aa)). The interval 591 to 696 (ASAVCLDMQS…AQKRRNSSVP (106 aa)) is interaction with AHCYL1. Phosphoserine is present on residues S592 and S607. S663 bears the Phosphoserine; by SGK1 mark. Residues 664–706 (FKSAKLGLGQSKKATKHKRERERAQKRRNSSVPNGKLPLDSPA) are disordered. A compositionally biased stretch (basic residues) spans 676–692 (KATKHKRERERAQKRRN). S719, S813, and S816 each carry phosphoserine.

Belongs to the monovalent cation:proton antiporter 1 (CPA1) transporter (TC 2.A.36) family. As to quaternary structure, homodimer. Found in the forms of complex and dynamic macromolecular complexes. Interacts with CHP1; this interaction increases trafficking and activity at the plasma membrane of SLC9A3. Interacts with CHP2 and SHANK2. Interacts with NHERF4 and interaction decreases in response to elevated calcium ion levels. Binds NHERF1 and NHERF2. Interacts with PDZK1 (via C-terminal PDZ domain). Interacts with AHCYL1; interaction is required for SLC9A3 activity. Interacts with EZR; interaction targets SLC9A3 to the apical membrane. Interacts with SNX27 (via PDZ domains); directs SLC9A3 membrane insertion from early endosomes to the plasma membrane. In terms of processing, phosphorylated by PKA, which inhibits activity. Phosphorylation at Ser-663 by SGK1 is associated with increased abundance at the cell membrane and activity. Phosphorylation at Ser-719 by CSNK2A1 regulates SLC9A3 activity through the formation of multiple signaling complexes. In terms of tissue distribution, intestinal and kidney specific. Most abundant in kidney cortex, followed equally by ileum and ascending colon, then kidney medulla and jejunum. Is absent from duodenum and descending colon.

The protein resides in the apical cell membrane. It localises to the cell membrane. It is found in the recycling endosome membrane. Its subcellular location is the early endosome membrane. It carries out the reaction Na(+)(in) + H(+)(out) = Na(+)(out) + H(+)(in). With respect to regulation, seems to switch between active and inactive modes in response to various stimuli. Activated directly or indirectly by membrane phosphatidylinositol (PIs). Regulated by a variety of auxiliary proteins, which facilitate the maturation, cell surface expression and function of the transporter. Inhibited specifically by the drug tenapanor. Plasma membrane Na(+)/H(+) antiporter. Exchanges intracellular H(+) ions for extracellular Na(+) in 1:1 stoichiometry, playing a key role in salt and fluid absorption and pH homeostasis. Major apical Na(+)/H(+) exchanger in kidney and intestine playing an important role in renal and intestine Na(+) absorption and blood pressure regulation. The chain is Sodium/hydrogen exchanger 3 (SLC9A3) from Oryctolagus cuniculus (Rabbit).